A 353-amino-acid chain; its full sequence is Phosphoribosylformylglycinamidine cyclo-ligase (353 aa).

The protein belongs to the AIR synthase family.

Its subcellular location is the cytoplasm. It catalyses the reaction 2-formamido-N(1)-(5-O-phospho-beta-D-ribosyl)acetamidine + ATP = 5-amino-1-(5-phospho-beta-D-ribosyl)imidazole + ADP + phosphate + H(+). Its pathway is purine metabolism; IMP biosynthesis via de novo pathway; 5-amino-1-(5-phospho-D-ribosyl)imidazole from N(2)-formyl-N(1)-(5-phospho-D-ribosyl)glycinamide: step 2/2. This Magnetococcus marinus (strain ATCC BAA-1437 / JCM 17883 / MC-1) protein is Phosphoribosylformylglycinamidine cyclo-ligase.